We begin with the raw amino-acid sequence, 111 residues long: MFAIICMNSLNCNRNGRISSRASLICLHTLSLVSFSFLANITCKSSSLTPAGIIESIPVVFTAVVSVLRCLIEEVLVTVSVVLFKISLGAIPKILRKVLVLYIILYYIILY.

3 helical membrane passes run 22 to 42, 48 to 68, and 75 to 95; these read ASLI…ANIT, LTPA…VSVL, and VLVT…PKIL.

It is found in the membrane. This is an uncharacterized protein from Saccharomyces cerevisiae (strain ATCC 204508 / S288c) (Baker's yeast).